The primary structure comprises 100 residues: MVVTKAAISENLFEKLKLTKRDSKEFVEFFFEEVRKSLEKGEDVKLSGFGNFQLKNKKERPGRNPRTGENILITQRRVVIFKAGQKLKNRVEHYLMKVKY.

It belongs to the bacterial histone-like protein family. Heterodimer of an alpha and a beta chain.

In terms of biological role, this protein is one of the two subunits of integration host factor, a specific DNA-binding protein that functions in genetic recombination as well as in transcriptional and translational control. The protein is Integration host factor subunit alpha of Buchnera aphidicola subsp. Schizaphis graminum (strain Sg).